We begin with the raw amino-acid sequence, 504 residues long: Glucose-6-phosphate isomerase (504 aa).

Glu-333 functions as the Proton donor in the catalytic mechanism. Active-site residues include His-364 and Lys-473.

This sequence belongs to the GPI family.

Its subcellular location is the cytoplasm. It carries out the reaction alpha-D-glucose 6-phosphate = beta-D-fructose 6-phosphate. It participates in carbohydrate biosynthesis; gluconeogenesis. It functions in the pathway carbohydrate degradation; glycolysis; D-glyceraldehyde 3-phosphate and glycerone phosphate from D-glucose: step 2/4. In terms of biological role, catalyzes the reversible isomerization of glucose-6-phosphate to fructose-6-phosphate. The sequence is that of Glucose-6-phosphate isomerase from Stenotrophomonas maltophilia (strain K279a).